A 454-amino-acid polypeptide reads, in one-letter code: Bleomycin hydrolase (454 aa).

An N-acetylmethionine modification is found at methionine 1. Residues cysteine 73 and histidine 372 contribute to the active site. Lysine 391 carries the N6-acetyllysine modification. Asparagine 396 is an active-site residue.

The protein belongs to the peptidase C1 family. In terms of assembly, homohexamer. Interacts with NUDT12 (via ANK repeats). Expressed at relatively higher levels in the stomach, esophagus, spleen, thymus and testis, and at lower levels in the skin, lung and skeletal muscle.

It localises to the cytoplasm. The protein resides in the cytoplasmic granule. It carries out the reaction Inactivates bleomycin B2 (a cytotoxic glycometallopeptide) by hydrolysis of a carboxyamide bond of beta-aminoalanine, but also shows general aminopeptidase activity. The specificity varies somewhat with source, but amino acid arylamides of Met, Leu and Ala are preferred.. Functionally, the normal physiological role of BLM hydrolase is unknown, but it catalyzes the inactivation of the antitumor drug BLM (a glycopeptide) by hydrolyzing the carboxamide bond of its B-aminoalaninamide moiety thus protecting normal and malignant cells from BLM toxicity. Binds single-stranded DNA with higher affinity than double-stranded DNA. May play an important role in the metabolism of antibiotics. This chain is Bleomycin hydrolase (Blmh), found in Rattus norvegicus (Rat).